Here is an 84-residue protein sequence, read N- to C-terminus: Small ribosomal subunit protein uS17 (84 aa).

It belongs to the universal ribosomal protein uS17 family. In terms of assembly, part of the 30S ribosomal subunit.

In terms of biological role, one of the primary rRNA binding proteins, it binds specifically to the 5'-end of 16S ribosomal RNA. This is Small ribosomal subunit protein uS17 from Aliivibrio salmonicida (strain LFI1238) (Vibrio salmonicida (strain LFI1238)).